We begin with the raw amino-acid sequence, 68 residues long: Erythrodihydroneopterin triphosphate synthetase (68 aa).

The residue at position 66 (Ser-66) is a Phosphoserine.

This Cavia porcellus (Guinea pig) protein is Erythrodihydroneopterin triphosphate synthetase.